Here is a 37-residue protein sequence, read N- to C-terminus: Large ribosomal subunit protein bL36 (37 aa).

It belongs to the bacterial ribosomal protein bL36 family.

The chain is Large ribosomal subunit protein bL36 from Helicobacter pylori (strain HPAG1).